Here is a 588-residue protein sequence, read N- to C-terminus: MDANDDPDEDHLTSYDVQLSIQESIEAGKTVFYPERFVPLSDQNRKLVEAIQQGHILELQEYVKYKYALDEADEKGWFPLHEAVVQPIQQILEVVLDASYKTLWEFKTSDGETPLTLAVKAGLVENVRTLLEKGVWPNTKNDKGETPLLLAIKRGSYDMVSALLKHNTSLDQPCVKRWSAMHEAAKQGHKDIIALLLNNGGNVHLKDGFGVTPLGVAAEYGHCDVLEHLIHKGGDVLALADDGASVLFEAAGGGNPDCISLLLEYGGSGNIPNRAGHLPIHRAAYEGHYLALKYLIPVTSKHAIQKSGLTPIHSAADGQNAQCLELLIENGFDVNSLLADHISESYDDERKTALYFAVCNNDILCTEILLAAGADPNLDPLNCLLVAVRANNHEIVRLLLAHGANVNCYFMHVNDTRFPSAIQYALNDEVMLRLLLNNGYQVEMCFECMHGDIFGNSFVWSEIEEEVLPGWTSCVIKDNPFCEFITVPWMKHLVGSVIRVLIDYMDYIPLCAKLKSALEVQREWPEIRQILENPCSLKHLCRLKIRRLMGLQRLCQPTLMEKLSLPPTIQRYILFKEYDLYGQELNLP.

ANK repeat units follow at residues 75–104, 110–139, 143–172, 176–205, 209–238, 242–271, 275–304, 307–336, 349–378, 379–408, and 416–444; these read KGWF…KTLW, DGET…WPNT, KGET…SLDQ, KRWS…NVHL, FGVT…DVLA, DGAS…SGNI, AGHL…KHAI, SGLT…DVNS, ERKT…DPNL, DPLN…NVNC, and TRFP…QVEM. Residues 524–579 form the SOCS box domain; it reads WPEIRQILENPCSLKHLCRLKIRRLMGLQRLCQPTLMEKLSLPPTIQRYILFKEYD.

It belongs to the ankyrin SOCS box (ASB) family.

The protein operates within protein modification; protein ubiquitination. In terms of biological role, may be a substrate-recognition component of a SCF-like ECS (Elongin-Cullin-SOCS-box protein) E3 ubiquitin-protein ligase complex which mediates the ubiquitination and subsequent proteasomal degradation of target proteins. The polypeptide is Ankyrin repeat and SOCS box protein 15 (ASB15) (Bos taurus (Bovine)).